The primary structure comprises 89 residues: Small ribosomal subunit protein uS15 (89 aa).

Belongs to the universal ribosomal protein uS15 family. As to quaternary structure, part of the 30S ribosomal subunit. Forms a bridge to the 50S subunit in the 70S ribosome, contacting the 23S rRNA.

Functionally, one of the primary rRNA binding proteins, it binds directly to 16S rRNA where it helps nucleate assembly of the platform of the 30S subunit by binding and bridging several RNA helices of the 16S rRNA. In terms of biological role, forms an intersubunit bridge (bridge B4) with the 23S rRNA of the 50S subunit in the ribosome. This is Small ribosomal subunit protein uS15 from Ruegeria sp. (strain TM1040) (Silicibacter sp.).